A 756-amino-acid polypeptide reads, in one-letter code: 1,4-alpha-glucan branching enzyme GlgB (756 aa).

Residue D425 is the Nucleophile of the active site. The active-site Proton donor is the E478.

This sequence belongs to the glycosyl hydrolase 13 family. GlgB subfamily. Monomer.

It catalyses the reaction Transfers a segment of a (1-&gt;4)-alpha-D-glucan chain to a primary hydroxy group in a similar glucan chain.. Its pathway is glycan biosynthesis; glycogen biosynthesis. Its function is as follows. Catalyzes the formation of the alpha-1,6-glucosidic linkages in glycogen by scission of a 1,4-alpha-linked oligosaccharide from growing alpha-1,4-glucan chains and the subsequent attachment of the oligosaccharide to the alpha-1,6 position. The polypeptide is 1,4-alpha-glucan branching enzyme GlgB (Cupriavidus necator (strain ATCC 17699 / DSM 428 / KCTC 22496 / NCIMB 10442 / H16 / Stanier 337) (Ralstonia eutropha)).